The chain runs to 691 residues: DNA ligase (691 aa).

Residues 41-45 (DAEYD), 90-91 (SL), and glutamate 130 each bind NAD(+). Catalysis depends on lysine 132, which acts as the N6-AMP-lysine intermediate. Arginine 153, glutamate 190, lysine 307, and lysine 331 together coordinate NAD(+). Zn(2+) is bound by residues cysteine 425, cysteine 428, cysteine 443, and cysteine 449. Residues 610 to 691 (APQGVLAGKT…LHQLLEGNTR (82 aa)) enclose the BRCT domain.

This sequence belongs to the NAD-dependent DNA ligase family. LigA subfamily. Mg(2+) serves as cofactor. The cofactor is Mn(2+).

It catalyses the reaction NAD(+) + (deoxyribonucleotide)n-3'-hydroxyl + 5'-phospho-(deoxyribonucleotide)m = (deoxyribonucleotide)n+m + AMP + beta-nicotinamide D-nucleotide.. DNA ligase that catalyzes the formation of phosphodiester linkages between 5'-phosphoryl and 3'-hydroxyl groups in double-stranded DNA using NAD as a coenzyme and as the energy source for the reaction. It is essential for DNA replication and repair of damaged DNA. The chain is DNA ligase from Burkholderia multivorans (strain ATCC 17616 / 249).